The following is a 589-amino-acid chain: PTS system mannitol-specific EIICB component (589 aa).

Topologically, residues 1–25 (MEEKVSLKVRVQKLGTSLSNMVMPN) are cytoplasmic. The PTS EIIC type-2 domain maps to 14–347 (LGTSLSNMVM…LHADKSTEDS (334 aa)). The helical transmembrane segment at 26-47 (IGAFIAWGVLTALFIADGYLPN) threads the bilayer. The Extracellular segment spans residues 48-51 (EQLA). A helical transmembrane segment spans residues 52–72 (TVVGPMLTYLLPILIGYTGGY). At 73–135 (MIHGQRGAVV…PGFEMLVNNF (63 aa)) the chain is on the cytoplasmic side. Residues 136-157 (SAGLVGFALLLLAFYAIGPVVS) form a helical membrane-spanning segment. Residues 158–166 (TLTGAVGNG) lie on the Extracellular side of the membrane. A helical membrane pass occupies residues 167–187 (VEAIVNARLLPMANIIIEPAK). The Cytoplasmic portion of the chain corresponds to 188-274 (VLFLNNALNH…VMMKPTLFLA (87 aa)). Residues 275–294 (AMAGGISGTFTFQLLDAGLK) traverse the membrane as a helical segment. Residues 295–316 (SPASPGSIIAIMATAPKGVWPH) lie on the Extracellular side of the membrane. The chain crosses the membrane as a helical span at residues 317 to 338 (LNILLGVLVAAVVSFLIAALIL). At 339-589 (HADKSTEDSL…YDKMAARMYK (251 aa)) the chain is on the cytoplasmic side. Residues 381 to 476 (EKIIFACDAG…SLTGASPIAE (96 aa)) form the PTS EIIB type-2 domain. The active-site Phosphocysteine intermediate; for EIIB activity is the C387. Phosphocysteine; by EIIA is present on C387.

As to quaternary structure, homodimer.

Its subcellular location is the cell membrane. It catalyses the reaction D-mannitol(out) + N(pros)-phospho-L-histidyl-[protein] = D-mannitol 1-phosphate(in) + L-histidyl-[protein]. The phosphoenolpyruvate-dependent sugar phosphotransferase system (sugar PTS), a major carbohydrate active transport system, catalyzes the phosphorylation of incoming sugar substrates concomitantly with their translocation across the cell membrane. The enzyme II CmtAB PTS system is involved in D-mannitol transport. This Streptococcus pneumoniae (strain ATCC BAA-255 / R6) protein is PTS system mannitol-specific EIICB component (mtlA).